Reading from the N-terminus, the 178-residue chain is Transcription factor E (178 aa).

In terms of domain architecture, HTH TFE/IIEalpha-type spans 3–86 (AHEALAEIAG…YWRITDEPIQ (84 aa)).

The protein belongs to the TFE family. Monomer. Interaction with RNA polymerase subunits RpoF and RpoE is necessary for Tfe stimulatory transcription activity. Able to interact with Tbp and RNA polymerase in the absence of DNA promoter. Interacts both with the preinitiation and elongation complexes.

Transcription factor that plays a role in the activation of archaeal genes transcribed by RNA polymerase. Facilitates transcription initiation by enhancing TATA-box recognition by TATA-box-binding protein (Tbp), and transcription factor B (Tfb) and RNA polymerase recruitment. Not absolutely required for transcription in vitro, but particularly important in cases where Tbp or Tfb function is not optimal. It dynamically alters the nucleic acid-binding properties of RNA polymerases by stabilizing the initiation complex and destabilizing elongation complexes. Seems to translocate with the RNA polymerase following initiation and acts by binding to the non template strand of the transcription bubble in elongation complexes. The sequence is that of Transcription factor E from Thermofilum pendens (strain DSM 2475 / Hrk 5).